Consider the following 610-residue polypeptide: Elongation factor 4 (610 aa).

The tr-type G domain occupies 13–195 (SHIRNFSIVA…AIVNRLPAPK (183 aa)). Residues 25–30 (DHGKST) and 142–145 (NKID) each bind GTP.

This sequence belongs to the TRAFAC class translation factor GTPase superfamily. Classic translation factor GTPase family. LepA subfamily.

Its subcellular location is the cell inner membrane. It carries out the reaction GTP + H2O = GDP + phosphate + H(+). Required for accurate and efficient protein synthesis under certain stress conditions. May act as a fidelity factor of the translation reaction, by catalyzing a one-codon backward translocation of tRNAs on improperly translocated ribosomes. Back-translocation proceeds from a post-translocation (POST) complex to a pre-translocation (PRE) complex, thus giving elongation factor G a second chance to translocate the tRNAs correctly. Binds to ribosomes in a GTP-dependent manner. The polypeptide is Elongation factor 4 (Rhizobium leguminosarum bv. trifolii (strain WSM2304)).